Here is a 990-residue protein sequence, read N- to C-terminus: Pro-apoptotic serine protease NMA111 (990 aa).

Positions 1–32 (MSVTNSNRKRSLSEVSEGSDPEAPAKTRNSYT) are disordered. The tract at residues 73-263 (VVSIHFSQVA…LPLDRILRAL (191 aa)) is serine protease. Catalysis depends on charge relay system residues His-111, Asp-142, and Ser-225. 2 PDZ domains span residues 290–368 (RRLG…QRGG) and 758–843 (SILT…VREG).

It belongs to the peptidase S1C family.

Its subcellular location is the nucleus. Nuclear serine protease which mediates apoptosis. This Vanderwaltozyma polyspora (strain ATCC 22028 / DSM 70294 / BCRC 21397 / CBS 2163 / NBRC 10782 / NRRL Y-8283 / UCD 57-17) (Kluyveromyces polysporus) protein is Pro-apoptotic serine protease NMA111 (NMA111).